We begin with the raw amino-acid sequence, 721 residues long: uncharacterized protein (721 aa).

Disordered regions lie at residues 196-291 (TSMT…VGGP) and 370-513 (AGIP…AAEQ). Composition is skewed to low complexity over residues 202 to 224 (SPAG…TSGP) and 232 to 250 (SPFG…SSGP). Pro residues-rich tracts occupy residues 264 to 283 (PMPP…PPSA) and 379 to 389 (APTPSPAPIAP). A compositionally biased stretch (low complexity) spans 419 to 429 (APAGPLPAYGA). The segment covering 435–446 (VTTPPATPPTPT) has biased composition (pro residues). The span at 470–484 (VNKSTAPATTQAQPS) shows a compositional bias: polar residues. Positions 491-505 (ASATAAATTGAAAGD) are enriched in low complexity.

This is an uncharacterized protein from Mycobacterium tuberculosis (strain ATCC 25618 / H37Rv).